The chain runs to 435 residues: D-inositol 3-phosphate glycosyltransferase (435 aa).

Position 25 (His25) interacts with 1D-myo-inositol 3-phosphate. Residues 31-32 (QP) and Gly39 contribute to the UDP-N-acetyl-alpha-D-glucosamine site. Residues 36–41 (DAGGMN), Lys94, Tyr127, Thr151, and Arg171 contribute to the 1D-myo-inositol 3-phosphate site. UDP-N-acetyl-alpha-D-glucosamine contacts are provided by Arg245 and Lys250. Residues Tyr320, Arg321, and Ala323 each coordinate Mg(2+). The UDP-N-acetyl-alpha-D-glucosamine site is built by Glu333 and Glu341. Residue Thr347 participates in Mg(2+) binding.

Belongs to the glycosyltransferase group 1 family. MshA subfamily. In terms of assembly, homodimer.

It carries out the reaction 1D-myo-inositol 3-phosphate + UDP-N-acetyl-alpha-D-glucosamine = 1D-myo-inositol 2-acetamido-2-deoxy-alpha-D-glucopyranoside 3-phosphate + UDP + H(+). In terms of biological role, catalyzes the transfer of a N-acetyl-glucosamine moiety to 1D-myo-inositol 3-phosphate to produce 1D-myo-inositol 2-acetamido-2-deoxy-glucopyranoside 3-phosphate in the mycothiol biosynthesis pathway. The protein is D-inositol 3-phosphate glycosyltransferase of Streptosporangium roseum (strain ATCC 12428 / DSM 43021 / JCM 3005 / KCTC 9067 / NCIMB 10171 / NRRL 2505 / NI 9100).